Consider the following 136-residue polypeptide: Large ribosomal subunit protein uL3 (136 aa).

N5-methylglutamine is present on Q83.

This sequence belongs to the universal ribosomal protein uL3 family. Part of the 50S ribosomal subunit. Forms a cluster with proteins L14 and L19. In terms of processing, methylated by PrmB.

One of the primary rRNA binding proteins, it binds directly near the 3'-end of the 23S rRNA, where it nucleates assembly of the 50S subunit. The polypeptide is Large ribosomal subunit protein uL3 (rplC) (Carsonella ruddii).